Reading from the N-terminus, the 469-residue chain is 3-isopropylmalate dehydratase large subunit (469 aa).

Positions 350, 410, and 413 each coordinate [4Fe-4S] cluster.

It belongs to the aconitase/IPM isomerase family. LeuC type 1 subfamily. Heterodimer of LeuC and LeuD. Requires [4Fe-4S] cluster as cofactor.

The catalysed reaction is (2R,3S)-3-isopropylmalate = (2S)-2-isopropylmalate. It functions in the pathway amino-acid biosynthesis; L-leucine biosynthesis; L-leucine from 3-methyl-2-oxobutanoate: step 2/4. Its function is as follows. Catalyzes the isomerization between 2-isopropylmalate and 3-isopropylmalate, via the formation of 2-isopropylmaleate. The chain is 3-isopropylmalate dehydratase large subunit from Brucella melitensis biotype 2 (strain ATCC 23457).